Here is a 179-residue protein sequence, read N- to C-terminus: Large ribosomal subunit protein uL5 (179 aa).

Belongs to the universal ribosomal protein uL5 family. Part of the 50S ribosomal subunit; part of the 5S rRNA/L5/L18/L25 subcomplex. Contacts the 5S rRNA and the P site tRNA. Forms a bridge to the 30S subunit in the 70S ribosome.

Functionally, this is one of the proteins that bind and probably mediate the attachment of the 5S RNA into the large ribosomal subunit, where it forms part of the central protuberance. In the 70S ribosome it contacts protein S13 of the 30S subunit (bridge B1b), connecting the 2 subunits; this bridge is implicated in subunit movement. Contacts the P site tRNA; the 5S rRNA and some of its associated proteins might help stabilize positioning of ribosome-bound tRNAs. This is Large ribosomal subunit protein uL5 from Rickettsia felis (strain ATCC VR-1525 / URRWXCal2) (Rickettsia azadi).